Here is a 137-residue protein sequence, read N- to C-terminus: Large ribosomal subunit protein uL16c (137 aa).

It belongs to the universal ribosomal protein uL16 family. Part of the 50S ribosomal subunit.

It is found in the plastid. The protein localises to the chloroplast. The protein is Large ribosomal subunit protein uL16c of Bigelowiella natans (Pedinomonas minutissima).